The chain runs to 37 residues: Rugosin-C (37 aa).

Residues cysteine 31 and cysteine 37 are joined by a disulfide bond.

Belongs to the frog skin active peptide (FSAP) family. Brevinin subfamily. Expressed by the skin glands.

The protein resides in the secreted. In terms of biological role, has antibacterial activity against Gram-positive bacteria. The protein is Rugosin-C of Glandirana rugosa (Japanese wrinkled frog).